Reading from the N-terminus, the 294-residue chain is Protoheme IX farnesyltransferase 1 (294 aa).

Helical transmembrane passes span 8 to 28 (VTKP…FLLA), 35 to 55 (PWLM…GCAI), 82 to 102 (AMAA…LLIA), 107 to 127 (AAVF…SLYM), 132 to 152 (VYGT…GYCA), 162 to 182 (LILL…IAIF), 208 to 228 (IVLY…SGYT), 229 to 249 (GAAF…MALR), and 263 to 283 (QVFA…AVDY).

It belongs to the UbiA prenyltransferase family. Protoheme IX farnesyltransferase subfamily.

The protein resides in the cell inner membrane. It catalyses the reaction heme b + (2E,6E)-farnesyl diphosphate + H2O = Fe(II)-heme o + diphosphate. The protein operates within porphyrin-containing compound metabolism; heme O biosynthesis; heme O from protoheme: step 1/1. Converts heme B (protoheme IX) to heme O by substitution of the vinyl group on carbon 2 of heme B porphyrin ring with a hydroxyethyl farnesyl side group. This Pseudoalteromonas translucida (strain TAC 125) protein is Protoheme IX farnesyltransferase 1.